A 602-amino-acid polypeptide reads, in one-letter code: Elongation factor 4 (602 aa).

The tr-type G domain maps to 7-196 (SKIRNFCIIA…HPQNEIKSPT (190 aa)). Residues 19 to 24 (DHGKST) and 136 to 139 (NKVD) each bind GTP.

The protein belongs to the TRAFAC class translation factor GTPase superfamily. Classic translation factor GTPase family. LepA subfamily.

Its subcellular location is the cell inner membrane. It catalyses the reaction GTP + H2O = GDP + phosphate + H(+). In terms of biological role, required for accurate and efficient protein synthesis under certain stress conditions. May act as a fidelity factor of the translation reaction, by catalyzing a one-codon backward translocation of tRNAs on improperly translocated ribosomes. Back-translocation proceeds from a post-translocation (POST) complex to a pre-translocation (PRE) complex, thus giving elongation factor G a second chance to translocate the tRNAs correctly. Binds to ribosomes in a GTP-dependent manner. This chain is Elongation factor 4, found in Prochlorococcus marinus (strain MIT 9515).